A 1436-amino-acid polypeptide reads, in one-letter code: MSSAGDSGPGYVLNDFDAVPRGTRGRRPGLVKDSLLDLVKVQKGSYNSFTPNNESNERLEAIFHTIFPISDPLHRATIEFLNCRVDDLKYSESECIKRGITFSAQVIASIRLVIMQDGVSLEKYQEIKEYDDHSKLATVIKSAEEQEVRFCELPMMTDKGTFIINGVEKVIVSQMHRSPGVFFDSDKGKTYNSGKLIYSARVIPYRGSWLDIEFDVKDHLYFRIDRKRKLPISVLLKALGLSNNDILNKFMKNRVYKHKSGWKVPFFPDKFKGVRLPFDLKNVEGNVLLKANVRITSKLAKNLYDNGLKEYLIPYDSICGLFLAEDLIDSASSTKILSAGESIKLEDIKKLELLSIDKISVLNIDNVSVGPYILNTLFLDENMSYENALYEIYKVLRPGEVPVLKIVEEFFRNLFFSPEYYDLSNIGRLKLNSCLGLNYEENLTTLTHEDIIEIIRKIVLLRDGQGSVDDDIDHLANRRVRSVGEFIENQFRTGLLKLGRAVVDSMSTSSLDKVSPSDFINPKVLTNVLRDFFNSSQLSQFMDQTNPLSEITHKRRLSALGPGGLTRERAGFEVRDVHPTHYGRICPIETPEQNIAYNSLAIYARINKYGFIESPYRKVVNKVVTDQIEYLSAIDEGLYYIADTSAKLDENNCFVDDMLYCRYAGTFVMVNSNQVSYIDLSPKQVISVAASLIPFLENDDANRALMGSNMQRQAVPLLKPTAPLVATGMESFVASGSGAVVLAKRGGIVDSSDSNSIVIRAFDKGGINYLDVDIYHLRKFQRSNHNTCINQKPLVHVGDCVKEGDVIADGPAINNGELALGQNLLVAFMSWQGYNFEDSIIISSEVVKKDLFTSIHIEEFECVVHDTPLGSEKITRAIPGVNEENLYHLDDSGIVKVGTRVGPGYILVGKVTPRHSLSLPPETKLLMTIFGEKSFDCVDSSLYTSPDIEGIVIDVQVFTRRGEEENERAFLIKQKEANDFEKERDHIINVINQYFYDELRKILINSGSQDRESINFIEREGWWDIGLKNQSISKQVESLKKDFDEKVSHAITNFKRKVEKLHEGYDLPQGVSMSVKVFIAVKHSLQPGDKMAGRHGNKGVISRVVPVEDMPYLEDGTPIDIILNPLGVPSRMNVGQMLETHVGWACKKLGEKVGNILDEINKIKRAFCEAIRSLSDDDFEKFAALYLDNKKFEDINDDEITASILDTPNKDELNNELTTLVENYFNSCKDAHSSLRHFLIEVYSCGSNLSICNNIRDINDNHLIEFAYKLRDGIPVTAPVFEGPKDEQIVKLFELAGLDNSGQVVLYDGCSGEKFDRKVTVGYMYMLKLHHLVDGKIHARSVGPYSLVTQQPLGGKSHFGGQRFGEMECWALQAYGAAYTLQEMLTVKSDDINGRVKIYESVIKGDSNFECGIPESFNVMIKELRSLCFNVDLNAK.

It belongs to the RNA polymerase beta chain family. As to quaternary structure, the RNAP catalytic core consists of 2 alpha, 1 beta, 1 beta' and 1 omega subunit. When a sigma factor is associated with the core the holoenzyme is formed, which can initiate transcription.

The enzyme catalyses RNA(n) + a ribonucleoside 5'-triphosphate = RNA(n+1) + diphosphate. DNA-dependent RNA polymerase catalyzes the transcription of DNA into RNA using the four ribonucleoside triphosphates as substrates. This Wolbachia pipientis protein is DNA-directed RNA polymerase subunit beta.